Consider the following 510-residue polypeptide: NAD(P)H-quinone oxidoreductase subunit 2, chloroplastic (510 aa).

The next 12 membrane-spanning stretches (helical) occupy residues 24 to 44 (LLLF…GLIL), 59 to 79 (WFYF…LFRW), 99 to 119 (IFQF…VEYI), 124 to 144 (MAIT…MFLC), 149 to 169 (LITI…LSGY), 183 to 203 (YLLM…WLYG), 229 to 249 (ISIA…PAPF), 295 to 315 (WHLL…LIAI), 323 to 343 (MLAY…IVGD), 354 to 374 (YMLF…LFGL), 395 to 415 (ALSS…AGFF), and 418 to 438 (LHLF…IGLL).

This sequence belongs to the complex I subunit 2 family. In terms of assembly, NDH is composed of at least 16 different subunits, 5 of which are encoded in the nucleus.

Its subcellular location is the plastid. The protein resides in the chloroplast thylakoid membrane. The catalysed reaction is a plastoquinone + NADH + (n+1) H(+)(in) = a plastoquinol + NAD(+) + n H(+)(out). The enzyme catalyses a plastoquinone + NADPH + (n+1) H(+)(in) = a plastoquinol + NADP(+) + n H(+)(out). In terms of biological role, NDH shuttles electrons from NAD(P)H:plastoquinone, via FMN and iron-sulfur (Fe-S) centers, to quinones in the photosynthetic chain and possibly in a chloroplast respiratory chain. The immediate electron acceptor for the enzyme in this species is believed to be plastoquinone. Couples the redox reaction to proton translocation, and thus conserves the redox energy in a proton gradient. This chain is NAD(P)H-quinone oxidoreductase subunit 2, chloroplastic, found in Ensete ventricosum (Abyssinian banana).